The chain runs to 964 residues: Translation initiation factor IF-2 (964 aa).

The interval 49–357 (QIGSAEPADD…QEFDEMQAPL (309 aa)) is disordered. A compositionally biased stretch (low complexity) spans 62–85 (AKPAARKSQTSSKKTSKETTTAKP). Residues 86-102 (APGPKPGPGPKPTPGPR) are compositionally biased toward pro residues. Low complexity predominate over residues 103-117 (PGSSSGPKPGRSSAA). Positions 159–169 (PHAPAPKPKPG) are enriched in pro residues. Composition is skewed to low complexity over residues 190–212 (GLPS…APRP) and 242–251 (GQGERMPRPG). 2 stretches are compositionally biased toward gly residues: residues 252–261 (GSQGSRGGSG) and 284–334 (GRGG…GRGG). Positions 335–346 (GGRRGRKSRKQR) are enriched in basic residues. Residues 458 to 629 (ARPPVVTVMG…AIVLTADAAL (172 aa)) form the tr-type G domain. The tract at residues 467-474 (GHVDHGKT) is G1. 467–474 (GHVDHGKT) provides a ligand contact to GTP. Residues 492–496 (GITQA) are G2. Positions 517-520 (DTPG) are G3. Residues 517–521 (DTPGH) and 571–574 (NKID) contribute to the GTP site. Residues 571–574 (NKID) form a G4 region. The interval 607–609 (SAR) is G5.

It belongs to the TRAFAC class translation factor GTPase superfamily. Classic translation factor GTPase family. IF-2 subfamily.

Its subcellular location is the cytoplasm. One of the essential components for the initiation of protein synthesis. Protects formylmethionyl-tRNA from spontaneous hydrolysis and promotes its binding to the 30S ribosomal subunits. Also involved in the hydrolysis of GTP during the formation of the 70S ribosomal complex. This is Translation initiation factor IF-2 from Cutibacterium acnes (strain DSM 16379 / KPA171202) (Propionibacterium acnes).